A 449-amino-acid polypeptide reads, in one-letter code: Flavonol 7-O-beta-glucosyltransferase UGT74F1 (449 aa).

His-18 functions as the Proton acceptor in the catalytic mechanism. Residue His-18 participates in an anthocyanidin binding. Residue Asp-111 is the Charge relay of the active site. Positions 133, 327, 342, 345, 346, 347, 350, 366, and 367 each coordinate UDP-alpha-D-glucose.

The protein belongs to the UDP-glycosyltransferase family.

The enzyme catalyses a 7-O-hydroxy-flavonol + UDP-alpha-D-glucose = a flavonol 7-O-beta-D-glucoside + UDP + H(+). Possesses quercetin 7-O-glucosyltransferase and 4'-O-glucosyltransferase activities in vitro. Also active in vitro on benzoates and benzoate derivatives. Has low affinity for the tryptophan precursor anthranilate. Catalyzes the formation of anthranilate glucose ester. Is a minor source of this activity in the plant. The protein is Flavonol 7-O-beta-glucosyltransferase UGT74F1 of Arabidopsis thaliana (Mouse-ear cress).